The following is a 1502-amino-acid chain: Gem-associated protein 5 (1502 aa).

An important for interaction with U1 snRNA region spans residues 1-124 (MKPEPRTLPP…LHWSPTVKDL (124 aa)). Residues 13–15 (NWY) form an interaction with U4 snRNA region. A Phosphoserine modification is found at Ser-48. 11 WD repeats span residues 62–104 (GHTE…VVTE), 107–148 (LHQH…QHLF), 150–189 (EPRTIFCLTCSPHHENLVAIGYKDGIVVIIDISKKGEVIH), 193–264 (GHDD…GVMV), 280–321 (TVKE…RRKY), 333–374 (HSRI…CCWT), 377–417 (SLGG…NNYD), 424–464 (GVKS…PPQI), 468–509 (YHKK…VVLQ), 533–573 (RYKL…LLCT), and 576–622 (QHHK…ESNP). Ser-624 is subject to Phosphoserine. 2 WD repeats span residues 637 to 677 (GHTA…PLFN) and 680 to 720 (GHRG…HSRP). Disordered stretches follow at residues 740–797 (KLKK…SPVV) and 819–838 (SSKATSLKKEPAKEKPEALL). A Glycyl lysine isopeptide (Lys-Gly) (interchain with G-Cter in SUMO2) cross-link involves residue Lys-754. Phosphoserine occurs at positions 757, 770, and 778. Residues 825–838 (LKKEPAKEKPEALL) show a composition bias toward basic and acidic residues. At Ser-845 the chain carries Phosphoserine. Disordered stretches follow at residues 1309 to 1338 (VSDKQSKPEDSASAEDMEQPPGPGPRLSAE) and 1378 to 1427 (HQKS…SLPE). Positions 1355 to 1382 (ASLQTSQRTVAEVQETLAEMIRQHQKSQ) form a coiled coil. Residues 1380-1391 (KSQLCKATTNGP) are compositionally biased toward polar residues. A compositionally biased stretch (basic and acidic residues) spans 1392 to 1407 (SRDEPSRDEPSQEAER).

The protein belongs to the WD repeat gemin-5 family. In terms of assembly, part of the core SMN complex that contains SMN1, GEMIN2/SIP1, DDX20/GEMIN3, GEMIN4, GEMIN5, GEMIN6, GEMIN7, GEMIN8 and STRAP/UNRIP. Part of the SMN-Sm complex that contains SMN1, GEMIN2/SIP1, DDX20/GEMIN3, GEMIN4, GEMIN5, GEMIN6, GEMIN7, GEMIN8, STRAP/UNRIP and the Sm proteins SNRPB, SNRPD1, SNRPD2, SNRPD3, SNRPE, SNRPF and SNRPG. Interacts directly with SMN1, SNRPB, SNRPD1, SNRPD2, SNRPD3 and SNRPE. Identified in a SMN complex that contains GEMIN2/SIP1. Interacts with cytosolic DDX20/GEMIN3 and GEMIN4. Interacts with SNRNP70 and HNRNPU. Identified in a complex with 80S ribosomes; binds to the 60S large ribosomal subunit. Interacts with the ribosomal subunits RPL3 and RPL4.

The protein resides in the nucleus. It localises to the nucleoplasm. It is found in the gem. The protein localises to the cytoplasm. Functionally, the SMN complex catalyzes the assembly of small nuclear ribonucleoproteins (snRNPs), the building blocks of the spliceosome, and thereby plays an important role in the splicing of cellular pre-mRNAs. Most spliceosomal snRNPs contain a common set of Sm proteins SNRPB, SNRPD1, SNRPD2, SNRPD3, SNRPE, SNRPF and SNRPG that assemble in a heptameric protein ring on the Sm site of the small nuclear RNA to form the core snRNP (Sm core). In the cytosol, the Sm proteins SNRPD1, SNRPD2, SNRPE, SNRPF and SNRPG are trapped in an inactive 6S pICln-Sm complex by the chaperone CLNS1A that controls the assembly of the core snRNP. To assemble core snRNPs, the SMN complex accepts the trapped 5Sm proteins from CLNS1A forming an intermediate. Binding of snRNA inside 5Sm ultimately triggers eviction of the SMN complex, thereby allowing binding of SNRPD3 and SNRPB to complete assembly of the core snRNP. Within the SMN complex, GEMIN5 recognizes and delivers the small nuclear RNAs (snRNAs) to the SMN complex. Binds to the 7-methylguanosine cap of RNA molecules. Binds to the 3'-UTR of SMN1 mRNA and regulates its translation; does not affect mRNA stability. May play a role in the regulation of protein synthesis via its interaction with ribosomes. In Mus musculus (Mouse), this protein is Gem-associated protein 5 (Gemin5).